The chain runs to 153 residues: UPF0266 membrane protein YPTB1631 (153 aa).

3 helical membrane passes run 6-26, 45-65, and 67-87; these read LVLV…EFIM, LDCM…VMAH, and APLT…ISYI.

Belongs to the UPF0266 family.

Its subcellular location is the cell inner membrane. In Yersinia pseudotuberculosis serotype I (strain IP32953), this protein is UPF0266 membrane protein YPTB1631.